Reading from the N-terminus, the 568-residue chain is Natural resistance-associated macrophage protein 2 (568 aa).

Residues 1-20 (MVLDPKEKMPDDGASGDHGD) show a composition bias toward basic and acidic residues. The disordered stretch occupies residues 1–45 (MVLDPKEKMPDDGASGDHGDSASLGAINPAYSNSSLPHSTGDSEE). At 1-69 (MVLDPKEKMP…EEYSCFSFRK (69 aa)) the chain is on the cytoplasmic side. Over residues 30–40 (AYSNSSLPHST) the composition is skewed to polar residues. Residues 70–90 (LWAFTGPGFLMSIAYLDPGNI) form a helical membrane-spanning segment. Residues 91-95 (ESDLQ) are Extracellular-facing. The chain crosses the membrane as a helical span at residues 96–117 (SGAVAGFKLLWVLLLATIVGLL). Residues 118–154 (LQRLAARLGVVTGLHLAEVCHRQYPKVPRIILWLMVE) are Cytoplasmic-facing. Residues 155-175 (LAIIGSDMQEVIGSAIAINLL) form a helical membrane-spanning segment. At 176 to 179 (SAGR) the chain is on the extracellular side. The chain crosses the membrane as a helical span at residues 180-194 (VPLWGGVLITIADTF). Residues 195–208 (VFLFLDKYGLRKLE) are Cytoplasmic-facing. Residues 209-229 (AFFGFLITIMALTFGYEYITV) traverse the membrane as a helical segment. The Extracellular portion of the chain corresponds to 230–255 (KPSQSQVLRGMFVPSCPGCRTPQVEQ). Residues 256 to 276 (AVGIVGAVIMPHNMYLHSALV) form a helical membrane-spanning segment. The Cytoplasmic portion of the chain corresponds to 277–301 (KSRQVNRANKQEVREANKYFFIESC). The helical transmembrane segment at 302-322 (IALFVSFIINVFVVSVFAEAF) threads the bilayer. Over 323 to 360 (FEKTNKQVVEVCKNNSSPHADLFPSDNSTLAVDIYKGG) the chain is Extracellular. N-linked (GlcNAc...) asparagine glycans are attached at residues N336 and N349. A helical membrane pass occupies residues 361–381 (VVLGCYFGPAALYIWAVGILA). At 382-408 (AGQSSTMTGTYSGQFVMEGFLNLKWSR) the chain is on the cytoplasmic side. The chain crosses the membrane as a helical span at residues 409-429 (FARVILTRSIAIIPTLLVAVF). At 430–440 (QDVEHLTGMND) the chain is on the extracellular side. A helical transmembrane segment spans residues 441 to 461 (FLNVLQSLQLPFALIPILTFT). The Cytoplasmic portion of the chain corresponds to 462 to 482 (SLRPVMSEFSNGIGWRIAGGI). Residues 483–503 (LVLIVCSINMYFVVVYVQELG) traverse the membrane as a helical segment. Topologically, residues 504–506 (HVA) are extracellular. Residues 507–527 (LYVVAAVVSVAYLTFVFYLGW) form a helical membrane-spanning segment. Residues 528–568 (QCLIALGLSFLDCGRSYRLGLTAQPELYLLNTVDADSVVSR) are Cytoplasmic-facing. Residues 555 to 559 (YLLNT) form a required for early endosome targeting region. L556, S564, and S567 each carry phosphoserine.

It belongs to the NRAMP family. Forms a complex with NDFIP1 and NEDD4L, in cortical neurons, in response to iron and cobalt exposure; this interaction leads to SLC11A2 ubiquitination by NEDD4L and proteasome-dependent degradation. Interacts with NDFIP1, NDFIP2 and WWP2; this interaction leads to SLC11A2 ubiquitination by WWP2 and subsequent proteasome-dependent degradation. Interacts with COX2 and TOM6 at the outer mitochondrion membrane. Interacts with ARRDC1; this interaction regulates the incorporation of SLC11A2 into extracellular vesicles through an ubiquitination-dependent mechanism. Interacts with ARRDC4; controls the incorporation of SLC11A2 into extracellular vesicles through an ubiquitination-dependent mechanism. Ubiquitinated by WWP2. Post-translationally, N-glycosylated. Abundantly expressed in erythroid precursor cells (at protein level). As to expression, expressed in duodenum (at protein level).

Its subcellular location is the golgi apparatus. It is found in the trans-Golgi network membrane. The protein localises to the early endosome membrane. The protein resides in the recycling endosome membrane. It localises to the cell membrane. Its subcellular location is the late endosome membrane. It is found in the lysosome membrane. The protein localises to the apical cell membrane. The protein resides in the mitochondrion outer membrane. It localises to the extracellular vesicle membrane. It catalyses the reaction Fe(2+)(in) + H(+)(in) = Fe(2+)(out) + H(+)(out). The enzyme catalyses Co(2+)(out) + H(+)(out) = Co(2+)(in) + H(+)(in). The catalysed reaction is Cd(2+)(out) + H(+)(out) = Cd(2+)(in) + H(+)(in). It carries out the reaction Mn(2+)(in) + H(+)(in) = Mn(2+)(out) + H(+)(out). It catalyses the reaction Zn(2+)(out) + H(+)(out) = Zn(2+)(in) + H(+)(in). The enzyme catalyses Ni(2+)(out) + H(+)(out) = Ni(2+)(in) + H(+)(in). The catalysed reaction is H(+)(in) = H(+)(out). It carries out the reaction Fe(2+)(in) = Fe(2+)(out). Proton-coupled metal ion symporter operating with a proton to metal ion stoichiometry of 1:1. Selectively transports various divalent metal cations, in decreasing affinity: Cd(2+) &gt; Fe(2+) &gt; Co(2+), Mn(2+) &gt;&gt; Zn(2+), Ni(2+), VO(2+). Essential for maintenance of iron homeostasis by modulating intestinal absorption of dietary Fe(2+) and TF-associated endosomal Fe(2+) transport in erythroid precursors and other cells. Enables Fe(2+) and Mn(2+) ion entry into mitochondria, and is thus expected to promote mitochondrial heme synthesis, iron-sulfur cluster biogenesis and antioxidant defense. Can mediate uncoupled fluxes of either protons or metal ions. This Mus musculus (Mouse) protein is Natural resistance-associated macrophage protein 2 (Slc11a2).